The sequence spans 278 residues: Dermonecrotic toxin Ls4SicTox-alphaIII1ii (278 aa).

The active site involves histidine 5. Positions 25 and 27 each coordinate Mg(2+). Residue histidine 40 is the Nucleophile of the active site. The cysteines at positions 44 and 50 are disulfide-linked. Aspartate 84 contributes to the Mg(2+) binding site.

Belongs to the arthropod phospholipase D family. Class I subfamily. Mg(2+) is required as a cofactor. As to expression, expressed by the venom gland.

The protein resides in the secreted. The catalysed reaction is an N-(acyl)-sphingosylphosphocholine = an N-(acyl)-sphingosyl-1,3-cyclic phosphate + choline. It carries out the reaction an N-(acyl)-sphingosylphosphoethanolamine = an N-(acyl)-sphingosyl-1,3-cyclic phosphate + ethanolamine. It catalyses the reaction a 1-acyl-sn-glycero-3-phosphocholine = a 1-acyl-sn-glycero-2,3-cyclic phosphate + choline. The enzyme catalyses a 1-acyl-sn-glycero-3-phosphoethanolamine = a 1-acyl-sn-glycero-2,3-cyclic phosphate + ethanolamine. Dermonecrotic toxins cleave the phosphodiester linkage between the phosphate and headgroup of certain phospholipids (sphingolipid and lysolipid substrates), forming an alcohol (often choline) and a cyclic phosphate. This toxin acts on sphingomyelin (SM). It may also act on ceramide phosphoethanolamine (CPE), lysophosphatidylcholine (LPC) and lysophosphatidylethanolamine (LPE), but not on lysophosphatidylserine (LPS), and lysophosphatidylglycerol (LPG). It acts by transphosphatidylation, releasing exclusively cyclic phosphate products as second products. Induces dermonecrosis, hemolysis, increased vascular permeability, edema, inflammatory response, and platelet aggregation. This is Dermonecrotic toxin Ls4SicTox-alphaIII1ii from Loxosceles sp. (strain 4 GJB-2008) (Recluse spider).